Here is a 291-residue protein sequence, read N- to C-terminus: Small ribosomal subunit protein uS2 (291 aa).

Belongs to the universal ribosomal protein uS2 family.

This is Small ribosomal subunit protein uS2 from Orientia tsutsugamushi (strain Boryong) (Rickettsia tsutsugamushi).